The following is a 237-amino-acid chain: Sugar fermentation stimulation protein homolog (237 aa).

The protein belongs to the SfsA family.

The polypeptide is Sugar fermentation stimulation protein homolog (Methylobacterium radiotolerans (strain ATCC 27329 / DSM 1819 / JCM 2831 / NBRC 15690 / NCIMB 10815 / 0-1)).